Here is a 345-residue protein sequence, read N- to C-terminus: Phosphoribosylformylglycinamidine cyclo-ligase (345 aa).

This sequence belongs to the AIR synthase family.

The protein localises to the cytoplasm. The enzyme catalyses 2-formamido-N(1)-(5-O-phospho-beta-D-ribosyl)acetamidine + ATP = 5-amino-1-(5-phospho-beta-D-ribosyl)imidazole + ADP + phosphate + H(+). Its pathway is purine metabolism; IMP biosynthesis via de novo pathway; 5-amino-1-(5-phospho-D-ribosyl)imidazole from N(2)-formyl-N(1)-(5-phospho-D-ribosyl)glycinamide: step 2/2. In Tolumonas auensis (strain DSM 9187 / NBRC 110442 / TA 4), this protein is Phosphoribosylformylglycinamidine cyclo-ligase.